We begin with the raw amino-acid sequence, 362 residues long: GTPase Obg (362 aa).

The region spanning Met-1–Leu-159 is the Obg domain. The interval His-129–Glu-148 is disordered. The span at Phe-130 to Lys-141 shows a compositional bias: polar residues. The OBG-type G domain maps to Ala-160 to Asp-334. Residues Gly-166–Ser-173, Phe-191–His-195, Asp-213–Gly-216, Asn-284–Asp-287, and Ser-315–Leu-317 contribute to the GTP site. Mg(2+)-binding residues include Ser-173 and Thr-193. Residues Arg-340–Asp-362 form a disordered region.

The protein belongs to the TRAFAC class OBG-HflX-like GTPase superfamily. OBG GTPase family. In terms of assembly, monomer. The cofactor is Mg(2+).

It localises to the cytoplasm. In terms of biological role, an essential GTPase which binds GTP, GDP and possibly (p)ppGpp with moderate affinity, with high nucleotide exchange rates and a fairly low GTP hydrolysis rate. Plays a role in control of the cell cycle, stress response, ribosome biogenesis and in those bacteria that undergo differentiation, in morphogenesis control. This Polynucleobacter asymbioticus (strain DSM 18221 / CIP 109841 / QLW-P1DMWA-1) (Polynucleobacter necessarius subsp. asymbioticus) protein is GTPase Obg.